The chain runs to 506 residues: Proline--tRNA ligase (506 aa).

The protein belongs to the class-II aminoacyl-tRNA synthetase family. ProS type 3 subfamily. As to quaternary structure, homodimer.

The protein localises to the cytoplasm. The catalysed reaction is tRNA(Pro) + L-proline + ATP = L-prolyl-tRNA(Pro) + AMP + diphosphate. Its function is as follows. Catalyzes the attachment of proline to tRNA(Pro) in a two-step reaction: proline is first activated by ATP to form Pro-AMP and then transferred to the acceptor end of tRNA(Pro). This chain is Proline--tRNA ligase, found in Akkermansia muciniphila (strain ATCC BAA-835 / DSM 22959 / JCM 33894 / BCRC 81048 / CCUG 64013 / CIP 107961 / Muc).